The following is a 411-amino-acid chain: 1-deoxy-D-xylulose 5-phosphate reductoisomerase (411 aa).

NADPH is bound by residues Thr-23, Gly-24, Ser-25, Ile-26, Gly-49, Arg-50, Asn-51, and Asn-137. Lys-138 contributes to the 1-deoxy-D-xylulose 5-phosphate binding site. Glu-139 is a binding site for NADPH. Asp-163 lines the Mn(2+) pocket. 1-deoxy-D-xylulose 5-phosphate-binding residues include Ser-164, Glu-165, Ser-199, and His-222. Position 165 (Glu-165) interacts with Mn(2+). NADPH is bound at residue Gly-228. 1-deoxy-D-xylulose 5-phosphate contacts are provided by Ser-235, Asn-240, Lys-241, and Glu-244. A Mn(2+)-binding site is contributed by Glu-244.

This sequence belongs to the DXR family. Mg(2+) serves as cofactor. It depends on Mn(2+) as a cofactor.

It catalyses the reaction 2-C-methyl-D-erythritol 4-phosphate + NADP(+) = 1-deoxy-D-xylulose 5-phosphate + NADPH + H(+). It functions in the pathway isoprenoid biosynthesis; isopentenyl diphosphate biosynthesis via DXP pathway; isopentenyl diphosphate from 1-deoxy-D-xylulose 5-phosphate: step 1/6. In terms of biological role, catalyzes the NADPH-dependent rearrangement and reduction of 1-deoxy-D-xylulose-5-phosphate (DXP) to 2-C-methyl-D-erythritol 4-phosphate (MEP). This Mannheimia succiniciproducens (strain KCTC 0769BP / MBEL55E) protein is 1-deoxy-D-xylulose 5-phosphate reductoisomerase.